The sequence spans 211 residues: Protein-L-isoaspartate O-methyltransferase (211 aa).

Ser60 is a catalytic residue.

Belongs to the methyltransferase superfamily. L-isoaspartyl/D-aspartyl protein methyltransferase family.

The protein localises to the cytoplasm. The enzyme catalyses [protein]-L-isoaspartate + S-adenosyl-L-methionine = [protein]-L-isoaspartate alpha-methyl ester + S-adenosyl-L-homocysteine. Functionally, catalyzes the methyl esterification of L-isoaspartyl residues in peptides and proteins that result from spontaneous decomposition of normal L-aspartyl and L-asparaginyl residues. It plays a role in the repair and/or degradation of damaged proteins. This chain is Protein-L-isoaspartate O-methyltransferase, found in Alteromonas mediterranea (strain DSM 17117 / CIP 110805 / LMG 28347 / Deep ecotype).